Reading from the N-terminus, the 529-residue chain is MNNNDLVAKLWKLCDNLRDGGVSYQNYVNELASLLFLKMCKETGQEAEYLPEGYRWDDLKSRIGQEQLQFYRKMLVHLGEDDKKLVQAVFHNVSTTITEPKQITALVSNMDSLDWYNGAHGKSRDDFGDMYEGLLQKNANETKSGAGQYFTPRPLIKTIIHLLKPQPREVVQDPAAGTAGFLIEADRYVKSQTNDLDDLDGDTQDFQIHRAFIGLELVPGTRRLALMNCLLHDIEGNLDHGGAIRLGNTLGSDGENLPKAHIVATNPPFGSAAGTNITRTFVHPTSNKQLCFMQHIIETLHPGGRAAVVVPDNVLFEGGKGTDIRRDLMDKCHLHTILRLPTGIFYAQGVKTNVLFFTKGTVANPNQDKNCTDDVWVYDLRTNMPSFGKRTPFTDEHLQPFERVYGEDPHGLSPRTEGEWSFNAEETEVADSEENKNTDQHLATSRWRKFSREWIRTAKSDSLDISWLKDKDSIDADSLPEPDVLAAEAMGELVQALSELDALMRELGASDEADLQRQLLEEAFGGVKE.

Residues Q148–R153, T178–G180, and E216 contribute to the S-adenosyl-L-methionine site.

It belongs to the N(4)/N(6)-methyltransferase family. As to quaternary structure, the type I restriction/modification system is composed of three polypeptides R, M and S. The restriction enzyme has stoichiometry R(2)M(2)S(1). The methyltransferase is composed of M(2)S(1). In terms of assembly, (Microbial infection) Interacts with Escherichia phage T7 protein Ocr; this interaction leads to the inhibition of the methyltransferase restriction enzyme M.EcoKI composed of M(2)S(1).

It carries out the reaction a 2'-deoxyadenosine in DNA + S-adenosyl-L-methionine = an N(6)-methyl-2'-deoxyadenosine in DNA + S-adenosyl-L-homocysteine + H(+). Its function is as follows. The subtype gamma methyltransferase (M) subunit of a type I restriction enzyme. The M and S subunits together form a methyltransferase (MTase) that methylates A-2 on the top and A-3 on the bottom strand of the sequence 5'-AACN(6)GTGC-3'. In the presence of the R subunit the complex can also act as an endonuclease, binding to the same target sequence but cutting the DNA some distance from this site. Whether the DNA is cut or modified depends on the methylation state of the target sequence. When the target site is unmodified, the DNA is cut. When the target site is hemimethylated, the complex acts as a maintenance MTase modifying the DNA so that both strands become methylated. After locating a non-methylated recognition site, the enzyme complex serves as a molecular motor that translocates DNA in an ATP-dependent manner until a collision occurs that triggers cleavage. The chain is Type I restriction enzyme EcoKI methylase subunit from Escherichia coli (strain K12).